A 391-amino-acid polypeptide reads, in one-letter code: Alkanesulfonate monooxygenase (391 aa).

It belongs to the SsuD family.

The catalysed reaction is an alkanesulfonate + FMNH2 + O2 = an aldehyde + FMN + sulfite + H2O + 2 H(+). In terms of biological role, catalyzes the desulfonation of aliphatic sulfonates. This Rhodopseudomonas palustris (strain TIE-1) protein is Alkanesulfonate monooxygenase.